We begin with the raw amino-acid sequence, 352 residues long: Glycerol-1-phosphate dehydrogenase [NAD(P)+] (352 aa).

NAD(+)-binding positions include 99–103 and 121–124; these read GKSID and TVAS. Asp126 serves as a coordination point for substrate. Residue Ser130 coordinates NAD(+). A substrate-binding site is contributed by Asp173. Residues Asp173 and His253 each coordinate Zn(2+). Residue His257 participates in substrate binding. His269 contributes to the Zn(2+) binding site.

The protein belongs to the glycerol-1-phosphate dehydrogenase family. In terms of assembly, homodimer. It depends on Zn(2+) as a cofactor.

It localises to the cytoplasm. It carries out the reaction sn-glycerol 1-phosphate + NAD(+) = dihydroxyacetone phosphate + NADH + H(+). It catalyses the reaction sn-glycerol 1-phosphate + NADP(+) = dihydroxyacetone phosphate + NADPH + H(+). It participates in membrane lipid metabolism; glycerophospholipid metabolism. With respect to regulation, totally inhibited by EDTA in vitro. In terms of biological role, catalyzes the NAD(P)H-dependent reduction of dihydroxyacetonephosphate (DHAP or glycerone phosphate) to glycerol 1-phosphate (G1P). The G1P thus generated is used as the glycerophosphate backbone of phospholipids in the cellular membranes of Archaea. Is also able to catalyze the reverse reaction, i.e. the NAD(+)-dependent oxidation of G1P but not of G3P. Is not active toward glycerol, dihydroxyacetone, glyceraldehyde phosphate, and glycerol-2-phosphate. This is Glycerol-1-phosphate dehydrogenase [NAD(P)+] (egsA) from Aeropyrum pernix (strain ATCC 700893 / DSM 11879 / JCM 9820 / NBRC 100138 / K1).